We begin with the raw amino-acid sequence, 111 residues long: MKRNFSKAFCNRNNYPEELFESKDFKEFNERSQNMPVQWVLDYAKRIFEGVRDICPDDEAPYFKKAWELVNQAYINALESSKGTDDDFILLAINDAIIEAINAFIDELDEE.

This is an uncharacterized protein from Escherichia coli (Bacteriophage T4).